A 160-amino-acid polypeptide reads, in one-letter code: Ribosomal RNA large subunit methyltransferase H (160 aa).

S-adenosyl-L-methionine is bound by residues L76, G108, and 127-132 (LGKMTW).

This sequence belongs to the RNA methyltransferase RlmH family. Homodimer.

It localises to the cytoplasm. The catalysed reaction is pseudouridine(1915) in 23S rRNA + S-adenosyl-L-methionine = N(3)-methylpseudouridine(1915) in 23S rRNA + S-adenosyl-L-homocysteine + H(+). Functionally, specifically methylates the pseudouridine at position 1915 (m3Psi1915) in 23S rRNA. The polypeptide is Ribosomal RNA large subunit methyltransferase H (Rhizobium meliloti (strain 1021) (Ensifer meliloti)).